We begin with the raw amino-acid sequence, 974 residues long: Protein bicaudal C homolog 1 (974 aa).

Positions 1-50 (MAAQGEPGYLAAQSDPGSNSERSTDSPVPGSEDDLVAGATLHSPEWSEER) are disordered. Phosphoserine is present on residues Ser-26, Ser-31, and Ser-43. KH domains follow at residues 132–199 (RVTL…RVRI) and 284–348 (PVST…RQYL). Position 398 is an N6-acetyllysine (Lys-398). A phosphoserine mark is found at Ser-576, Ser-612, and Ser-679. Disordered stretches follow at residues 593–644 (VLSA…GDLK), 665–719 (GTKN…HLAP), and 783–846 (YKPT…KSTE). Residues 602 to 619 (SIQTSGSEQTSPKSSPTE) show a composition bias toward polar residues. Basic and acidic residues predominate over residues 690–703 (LADKKAPGSERAAE). The SAM domain maps to 873–936 (FKGSDLPELF…LLAISELNKN (64 aa)).

The protein belongs to the BicC family. As to quaternary structure, interacts (via KH domains) with ANKS6 (via SAM domain) in an RNA-dependent manner. Interacts with ANKS3.

The protein resides in the cytoplasm. Functionally, putative RNA-binding protein. Acts as a negative regulator of Wnt signaling. May be involved in regulating gene expression during embryonic development. The polypeptide is Protein bicaudal C homolog 1 (BICC1) (Homo sapiens (Human)).